Reading from the N-terminus, the 248-residue chain is 3-deoxy-manno-octulosonate cytidylyltransferase (248 aa).

This sequence belongs to the KdsB family.

It localises to the cytoplasm. It catalyses the reaction 3-deoxy-alpha-D-manno-oct-2-ulosonate + CTP = CMP-3-deoxy-beta-D-manno-octulosonate + diphosphate. The protein operates within nucleotide-sugar biosynthesis; CMP-3-deoxy-D-manno-octulosonate biosynthesis; CMP-3-deoxy-D-manno-octulosonate from 3-deoxy-D-manno-octulosonate and CTP: step 1/1. It participates in bacterial outer membrane biogenesis; lipopolysaccharide biosynthesis. Functionally, activates KDO (a required 8-carbon sugar) for incorporation into bacterial lipopolysaccharide in Gram-negative bacteria. In Chlorobaculum tepidum (strain ATCC 49652 / DSM 12025 / NBRC 103806 / TLS) (Chlorobium tepidum), this protein is 3-deoxy-manno-octulosonate cytidylyltransferase.